A 153-amino-acid polypeptide reads, in one-letter code: Ribosomal RNA large subunit methyltransferase H (153 aa).

Residues I75, G103, and 121–126 (LSAMTF) each bind S-adenosyl-L-methionine.

This sequence belongs to the RNA methyltransferase RlmH family. In terms of assembly, homodimer.

The protein localises to the cytoplasm. The catalysed reaction is pseudouridine(1915) in 23S rRNA + S-adenosyl-L-methionine = N(3)-methylpseudouridine(1915) in 23S rRNA + S-adenosyl-L-homocysteine + H(+). Its function is as follows. Specifically methylates the pseudouridine at position 1915 (m3Psi1915) in 23S rRNA. This chain is Ribosomal RNA large subunit methyltransferase H, found in Helicobacter hepaticus (strain ATCC 51449 / 3B1).